A 51-amino-acid polypeptide reads, in one-letter code: Insulin (51 aa).

3 disulfides stabilise this stretch: cysteine 7–cysteine 37, cysteine 19–cysteine 50, and cysteine 36–cysteine 41.

The protein belongs to the insulin family. Heterodimer of a B chain and an A chain linked by two disulfide bonds.

The protein resides in the secreted. Its function is as follows. Insulin decreases blood glucose concentration. It increases cell permeability to monosaccharides, amino acids and fatty acids. It accelerates glycolysis, the pentose phosphate cycle, and glycogen synthesis in liver. This chain is Insulin (INS), found in Anser anser anser (Western greylag goose).